We begin with the raw amino-acid sequence, 360 residues long: MKKKVIVGMSGGVDSSVAALLLKEQGYEVVGLFMKNWEDDDTDEYCPAKQDLIDAAAVADKIGIELEAVNFSKEYKERVFANFLEEYSAGRTPNPDILCNSEIKFKAFLDHAMALGGDLMATGHYAQVREKNGLFQLMKADDGTKDQSYFLYRLNQAQLSKTLFPLGHLLKREIRDIARRAGLPTSEKKDSTGICFIGERPFQEFLSRYLPRAPGEIQTPEGKVVGQHHGLMYYTMGQRQGLGIGGSKDSNGEPWFVAGKDMQRNVLIVVQGHDHPLLLNDGLIADNLHWIAGEEPKTHWVYAAKTRYRQPDAPCEIDRLDSGTAEIRFGHKQWAITPGQSVVVYESNVCLGGGIITSAL.

Residues 8–15 and Met-34 each bind ATP; that span reads GMSGGVDS. The tract at residues 94–96 is interaction with target base in tRNA; the sequence is NPD. Cys-99 acts as the Nucleophile in catalysis. Residues Cys-99 and Cys-195 are joined by a disulfide bond. Gly-123 is an ATP binding site. The tract at residues 145–147 is interaction with tRNA; it reads KDQ. Cys-195 (cysteine persulfide intermediate) is an active-site residue. The segment at 307 to 308 is interaction with tRNA; sequence RY.

This sequence belongs to the MnmA/TRMU family.

The protein resides in the cytoplasm. The enzyme catalyses S-sulfanyl-L-cysteinyl-[protein] + uridine(34) in tRNA + AH2 + ATP = 2-thiouridine(34) in tRNA + L-cysteinyl-[protein] + A + AMP + diphosphate + H(+). In terms of biological role, catalyzes the 2-thiolation of uridine at the wobble position (U34) of tRNA, leading to the formation of s(2)U34. The protein is tRNA-specific 2-thiouridylase MnmA of Methylobacillus flagellatus (strain ATCC 51484 / DSM 6875 / VKM B-1610 / KT).